The sequence spans 218 residues: Protein-methionine-sulfoxide reductase heme-binding subunit MsrQ (218 aa).

Helical transmembrane passes span 14–34, 60–80, 86–106, 121–141, and 155–175; these read LVHA…WQVW, FLLI…AVVI, LGLY…TLDL, PYIT…ITST, and LHTL…WLVK.

The protein belongs to the MsrQ family. In terms of assembly, heterodimer of a catalytic subunit (MsrP) and a heme-binding subunit (MsrQ). Requires FMN as cofactor. Heme b is required as a cofactor.

Its subcellular location is the cell inner membrane. Its function is as follows. Part of the MsrPQ system that repairs oxidized periplasmic proteins containing methionine sulfoxide residues (Met-O), using respiratory chain electrons. Thus protects these proteins from oxidative-stress damage caused by reactive species of oxygen and chlorine generated by the host defense mechanisms. MsrPQ is essential for the maintenance of envelope integrity under bleach stress, rescuing a wide series of structurally unrelated periplasmic proteins from methionine oxidation. MsrQ provides electrons for reduction to the reductase catalytic subunit MsrP, using the quinone pool of the respiratory chain. This is Protein-methionine-sulfoxide reductase heme-binding subunit MsrQ from Xanthomonas euvesicatoria pv. vesicatoria (strain 85-10) (Xanthomonas campestris pv. vesicatoria).